A 701-amino-acid polypeptide reads, in one-letter code: MYSEETQRKLIEKTREFLNLDIKSIDRKKAESIIEDLREVIRFHDWRYYVLAQPVISDYEYDKLFKLLKDIESKYPDLITPDSPTQRVPSEITKVFPQVKHLTPMLSLDNSYNEADLRDFDRRVRELTGLEKIEYAVEPKFDGAGISLIYEKDLFKRGATRGDGEVGEDITNNLKVIKSIPLSAKFSSYGIDKVEIRGEVLIRKDIFKRINEQRLEEGLPLFANPRNAAAGSIRLQDPKEVAKRGLEAFVYQITYAEKDGKNLLGTVLKKHSDNIKMLHLLGFKTPYEVLKVCNGIDEVIDYCREWERKRDNYPYEIDGMVIKVNDISLYEKLGFTSHHPRWAIAYKFKARQATTKIIDVVFQVGRTGAITPVAKLQPVEIGGVIVSSVSLFNEDFIREKDIRIGDTVLVERAGDVIPYVVMVIKEARTGNEKPIEFPKNCPSCGSPLVKPLGEAVYRCININCPAQVIERIIHFASKDAMDIKGLSEATVKKFYKLGLLKSIPDIYRLDFRIIKNIQGFGEKSVNNLKQAIEESKNRPLYRLIYGLGIRYVGEVTAKTLASAVNCLEDLKNFTITDLMKLPDIGDKVATEIYNFFHNEQNLKMIQQLKELGVNVCNPKEEKRGKLAGLNFVFTGALKCCSREKAKEIVESLGGNVLDTVSKKVHYLVVGEEPGSKLQKAQKIPTIKIINEEEFLKMIGQQ.

NAD(+)-binding positions include 58–62, 107–108, and E138; these read DYEYD and SL. K140 functions as the N6-AMP-lysine intermediate in the catalytic mechanism. 4 residues coordinate NAD(+): R161, E199, K323, and K347. C441, C444, C459, and C464 together coordinate Zn(2+). In terms of domain architecture, BRCT spans 621 to 701; it reads EKRGKLAGLN…EEFLKMIGQQ (81 aa).

It belongs to the NAD-dependent DNA ligase family. LigA subfamily. Requires Mg(2+) as cofactor. Mn(2+) is required as a cofactor.

It carries out the reaction NAD(+) + (deoxyribonucleotide)n-3'-hydroxyl + 5'-phospho-(deoxyribonucleotide)m = (deoxyribonucleotide)n+m + AMP + beta-nicotinamide D-nucleotide.. In terms of biological role, DNA ligase that catalyzes the formation of phosphodiester linkages between 5'-phosphoryl and 3'-hydroxyl groups in double-stranded DNA using NAD as a coenzyme and as the energy source for the reaction. It is essential for DNA replication and repair of damaged DNA. The polypeptide is DNA ligase (Sulfurihydrogenibium azorense (strain DSM 15241 / OCM 825 / Az-Fu1)).